The following is a 948-amino-acid chain: Coatomer subunit beta-1 (948 aa).

HEAT repeat units lie at residues 49-87, 92-126, 127-164, 274-311, 312-349, and 391-428; these read ETIPQLFITIIRYVLPSEDHTIQKLLLLYLELIEKTDSK, PEMILICQNLRNNLQHPNEYIRGVTLRFLCRMKET, EIVEPLTPSVLQNLEHRHPFVRRNAILAIMSIYKLPQG, TAIRAAANTYCQLLLSQSDNNVKLILLDRLYELKTLHR, DIMVELIIDVLRALSSPNLDIRRKTLDISLDLITHHNI, and EVASTVVHLLMDFLGDSNVASALDVVVFVREIIETNPK.

Oligomeric complex that consists of at least the alpha, beta, beta', gamma, delta, epsilon and zeta subunits.

The protein resides in the cytoplasm. It is found in the golgi apparatus membrane. Its subcellular location is the cytoplasmic vesicle. The protein localises to the COPI-coated vesicle membrane. Its function is as follows. The coatomer is a cytosolic protein complex that binds to dilysine motifs and reversibly associates with Golgi non-clathrin-coated vesicles, which further mediate biosynthetic protein transport from the ER, via the Golgi up to the trans Golgi network. Coatomer complex is required for budding from Golgi membranes, and is essential for the retrograde Golgi-to-ER transport of dilysine-tagged proteins. In Arabidopsis thaliana (Mouse-ear cress), this protein is Coatomer subunit beta-1.